Reading from the N-terminus, the 858-residue chain is Chitin synthase 2 (858 aa).

Residues 1–12 (MYPEGPKPEHDQ) are compositionally biased toward basic and acidic residues. The tract at residues 1–116 (MYPEGPKPEH…GQAPRRQPRR (116 aa)) is disordered. The segment covering 15-24 (LQDTQFSNQP) has biased composition (polar residues). Composition is skewed to pro residues over residues 52–68 (AYPPTQYPTSPPPPNFP) and 76–89 (PYPPFNNNPSPVSP). The next 7 helical transmembrane spans lie at 500-517 (RWLNGSFFAGVYALYHWR), 540-560 (TYNLIFSWFALGNFYLTFFIL), 586-606 (LHTVFNYIYIVLIVIQFIMAL), 621-641 (MVFFAILMVYMMFAAIWITVV), 665-685 (NIIISLCATYVMYFVSSFMFL), 799-819 (VLAWIISNLALVVAIANTTVI), and 825-845 (ASIYLGFILWSVAGLSVIRFT).

It belongs to the chitin synthase family.

The protein resides in the cell membrane. It carries out the reaction [(1-&gt;4)-N-acetyl-beta-D-glucosaminyl](n) + UDP-N-acetyl-alpha-D-glucosamine = [(1-&gt;4)-N-acetyl-beta-D-glucosaminyl](n+1) + UDP + H(+). Polymerizes chitin, a structural polymer of the cell wall and septum, by transferring the sugar moiety of UDP-GlcNAc to the non-reducing end of the growing chitin polymer. The chain is Chitin synthase 2 (CHS2) from Rhizopus oligosporus (Rhizopus microsporus var. oligosporus).